Here is a 66-residue protein sequence, read N- to C-terminus: Cytoplasmic envelopment protein 3 (66 aa).

Residue Gly2 is the site of N-myristoyl glycine; by host attachment.

This sequence belongs to the herpesviridae cytoplasmic envelopment protein 3 family. In terms of assembly, interacts with cytoplasmic envelopment protein 2; this interaction is essential for the proper localization of each protein to the assembly complex and thus for the production of infectious virus. Phosphorylated. Phosphorylation does not seem to be required for recycling to the host Golgi apparatus. Packaging is selective for underphosphorylated forms.

Its subcellular location is the virion tegument. The protein localises to the virion membrane. It localises to the host cell membrane. The protein resides in the host Golgi apparatus membrane. In terms of biological role, plays an important role in the cytoplasmic envelopment of tegument proteins and capsids during the assembly and egress processes. Also participates in viral entry at the fusion step probably by regulating the core fusion machinery. The protein is Cytoplasmic envelopment protein 3 (38) of Saimiriine herpesvirus 2 (strain 11) (SaHV-2).